Consider the following 429-residue polypeptide: tRNA (guanine(9)-N1)-methyltransferase (429 aa).

Positions Lys131–Pro379 constitute an SAM-dependent MTase TRM10-type domain. Residues Leu285–Ser286, Gly305, Asp309–His313, Cys317, Leu331, and Lys344–Leu346 contribute to the S-adenosyl-L-methionine site. Asp309 (proton acceptor) is an active-site residue. Positions Ala383–Gln429 are disordered. The segment covering Ala386–Lys395 has biased composition (basic and acidic residues). A compositionally biased stretch (acidic residues) spans Val396–Gln429.

This sequence belongs to the class IV-like SAM-binding methyltransferase superfamily. TRM10 family. Monomer.

The protein resides in the cytoplasm. The protein localises to the nucleus. The enzyme catalyses guanosine(9) in tRNA + S-adenosyl-L-methionine = N(1)-methylguanosine(9) in tRNA + S-adenosyl-L-homocysteine + H(+). Functionally, S-adenosyl-L-methionine-dependent guanine N(1)-methyltransferase that catalyzes the formation of N(1)-methylguanine at position 9 (m1G9) in cytoplasmic tRNA. The chain is tRNA (guanine(9)-N1)-methyltransferase from Cryptococcus neoformans var. neoformans serotype D (strain B-3501A) (Filobasidiella neoformans).